A 784-amino-acid chain; its full sequence is Serine/threonine-protein kinase DCLK2 (784 aa).

The tract at residues 1–45 (MASTRSIELEHFEERDKRPRPGSRRGAPSSSGGSSSSGPKGNGLI) is disordered. Positions 7–19 (IELEHFEERDKRP) are enriched in basic and acidic residues. Residues 24-39 (RRGAPSSSGGSSSSGP) are compositionally biased toward low complexity. Thr61 carries the phosphothreonine modification. 2 consecutive Doublecortin domains span residues 72–158 (KKAR…VDYT) and 197–280 (KLVT…AQDD). Low complexity-rich tracts occupy residues 300-312 (AVKYSGSKSPGPS) and 341-364 (TPSSQLSTPKSTKSSSSSPTSPGS). Positions 300–368 (AVKYSGSKSP…PTSPGSFRGL (69 aa)) are disordered. Ser379 carries the post-translational modification Phosphoserine. The Protein kinase domain maps to 411–668 (YKIGKVIGDG…AGEILSHPWV (258 aa)). ATP is bound by residues 417–425 (IGDGNFAVV) and Lys440. The active-site Proton acceptor is Asp532. A Phosphoserine modification is found at Ser664. The residue at position 683 (Thr683) is a Phosphothreonine. Positions 724-784 (CQDSSRPGME…RAGTWRRHRD (61 aa)) are disordered. Positions 741–758 (SASAEEPPVSAPAAAPAP) are enriched in low complexity.

It belongs to the protein kinase superfamily. CAMK Ser/Thr protein kinase family. CaMK subfamily. In terms of assembly, binds to and stabilizes microtubules. Interacts with MAPK8IP1/JIP-1, MAPK8IP2/JIP-2, MAPK9/JNK2, PPP1R9B/NEURABIN-2 and actin. Autophosphorylated.

Its subcellular location is the cytoplasm. It localises to the cytoskeleton. It carries out the reaction L-seryl-[protein] + ATP = O-phospho-L-seryl-[protein] + ADP + H(+). It catalyses the reaction L-threonyl-[protein] + ATP = O-phospho-L-threonyl-[protein] + ADP + H(+). Protein kinase with a significantly reduced Ca(2+)/CAM affinity and dependence compared to other members of the CaMK family. May play a role in the down-regulation of CRE-dependent gene activation probably by phosphorylation of the CREB coactivator CRTC2/TORC2 and the resulting retention of TORC2 in the cytoplasm. This Ailuropoda melanoleuca (Giant panda) protein is Serine/threonine-protein kinase DCLK2 (DCLK2).